Reading from the N-terminus, the 184-residue chain is Photosystem I assembly protein Ycf4 (184 aa).

The next 2 helical transmembrane spans lie at 21–43 (NFCWAFILFLGSSGFLLVGISSY) and 63–85 (GLVMSFYGIAGLFISAYLWCAIS).

The protein belongs to the Ycf4 family.

It is found in the plastid. Its subcellular location is the chloroplast thylakoid membrane. Functionally, seems to be required for the assembly of the photosystem I complex. The chain is Photosystem I assembly protein Ycf4 from Spinacia oleracea (Spinach).